Here is a 385-residue protein sequence, read N- to C-terminus: Di-N-acetylchitobiase (385 aa).

An N-terminal signal peptide occupies residues 1–38 (MSRPQLRRWRLVSSPPSGVPGLALLALLALLALRLAAG). In terms of domain architecture, GH18 spans 39–385 (TDCPCPEPEL…EVLKPKLLQR (347 aa)). The active-site Proton donor is the Glu-143. N-linked (GlcNAc...) asparagine glycans are attached at residues Asn-193, Asn-228, Asn-262, and Asn-299.

The protein belongs to the glycosyl hydrolase 18 family.

The protein resides in the lysosome. In terms of biological role, involved in the degradation of asparagine-linked glycoproteins. Hydrolyze of N-acetyl-beta-D-glucosamine (1-4)N-acetylglucosamine chitobiose core from the reducing end of the bond, it requires prior cleavage by glycosylasparaginase. In Homo sapiens (Human), this protein is Di-N-acetylchitobiase (CTBS).